An 82-amino-acid chain; its full sequence is Three-finger toxin MicTx3 (82 aa).

An N-terminal signal peptide occupies residues 1-21; sequence MKTLLLTLVVVTIMCLDLGYT. Cystine bridges form between Cys24–Cys44, Cys38–Cys59, Cys63–Cys74, and Cys75–Cys80.

Belongs to the three-finger toxin family. Short-chain subfamily. Expressed by the venom gland.

It is found in the secreted. Has been described to inhibit nicotinic acetylcholine receptor (nAChR) alpha-7/CHRNA7 subunits and to bind acetylcholine binding protein (AChBP) (Kd=29.5 nM). This is Three-finger toxin MicTx3 from Micrurus corallinus (Brazilian coral snake).